A 259-amino-acid chain; its full sequence is Diaminopimelate epimerase (259 aa).

Substrate contacts are provided by N14, Q42, and N60. C69 serves as the catalytic Proton donor. Substrate-binding positions include 70–71 (GN), N151, N184, and 202–203 (ER). The Proton acceptor role is filled by C211. 212-213 (GS) lines the substrate pocket.

Belongs to the diaminopimelate epimerase family. In terms of assembly, homodimer.

It is found in the cytoplasm. The catalysed reaction is (2S,6S)-2,6-diaminopimelate = meso-2,6-diaminopimelate. Its pathway is amino-acid biosynthesis; L-lysine biosynthesis via DAP pathway; DL-2,6-diaminopimelate from LL-2,6-diaminopimelate: step 1/1. Its function is as follows. Catalyzes the stereoinversion of LL-2,6-diaminopimelate (L,L-DAP) to meso-diaminopimelate (meso-DAP), a precursor of L-lysine and an essential component of the bacterial peptidoglycan. In Wolbachia sp. subsp. Brugia malayi (strain TRS), this protein is Diaminopimelate epimerase.